Reading from the N-terminus, the 127-residue chain is Glycine cleavage system H protein (127 aa).

A Lipoyl-binding domain is found at 24–105 (TALVGITDFA…YGSGWMVKMK (82 aa)). Lys-65 carries the post-translational modification N6-lipoyllysine.

It belongs to the GcvH family. In terms of assembly, the glycine cleavage system is composed of four proteins: P, T, L and H. (R)-lipoate serves as cofactor.

In terms of biological role, the glycine cleavage system catalyzes the degradation of glycine. The H protein shuttles the methylamine group of glycine from the P protein to the T protein. In Chlorobium luteolum (strain DSM 273 / BCRC 81028 / 2530) (Pelodictyon luteolum), this protein is Glycine cleavage system H protein.